Here is a 348-residue protein sequence, read N- to C-terminus: GMP reductase 2 (348 aa).

Residues 26–27 (SR), Lys78, 129–131 (DVA), and 180–181 (IG) each bind NADP(+). K(+) is bound by residues Gly181, Gly183, and Cys186. The Thioimidate intermediate role is filled by Cys186. The Proton donor/acceptor role is filled by Thr188. Arg189 lines the K(+) pocket. Residues 219-221 (DGG), 242-243 (GG), 268-270 (GMS), and 286-290 (RASEG) contribute to the GMP site. Residues Met269 and 285 to 286 (YR) each bind NADP(+). Position 291 is an N6-acetyllysine (Lys291). Residue 314-317 (STCT) coordinates NADP(+).

The protein belongs to the IMPDH/GMPR family. GuaC type 1 subfamily. As to quaternary structure, homotetramer. In terms of tissue distribution, highly expressed in heart, skeletal muscle, kidney, brain, liver, prostate, spleen, placenta, testis and ovary. Low expression in colon, thymus and peripheral blood leukocytes.

The enzyme catalyses IMP + NH4(+) + NADP(+) = GMP + NADPH + 2 H(+). Catalyzes the irreversible NADPH-dependent deamination of GMP to IMP. It functions in the conversion of nucleobase, nucleoside and nucleotide derivatives of G to A nucleotides, and in maintaining the intracellular balance of A and G nucleotides. Plays a role in modulating cellular differentiation. This Homo sapiens (Human) protein is GMP reductase 2.